We begin with the raw amino-acid sequence, 465 residues long: Chromosomal replication initiator protein DnaA (465 aa).

Residues 1-84 (MSLSLWQQCL…RFEVGSKPLV (84 aa)) are domain I, interacts with DnaA modulators. Residues 84 to 128 (VQAISQPAQPHHKQVSAAPQQQVRSAPVRPSWDNSPAQAEHTYRS) are domain II. The interval 91-120 (AQPHHKQVSAAPQQQVRSAPVRPSWDNSPA) is disordered. Residues 129–345 (NVNPKHTFDN…GALNRVIANA (217 aa)) are domain III, AAA+ region. ATP-binding residues include G173, G175, K176, and T177. The interval 346–465 (NFTGRSITID…FSNLIRTLSS (120 aa)) is domain IV, binds dsDNA.

It belongs to the DnaA family. Oligomerizes as a right-handed, spiral filament on DNA at oriC.

It is found in the cytoplasm. Functionally, plays an essential role in the initiation and regulation of chromosomal replication. ATP-DnaA binds to the origin of replication (oriC) to initiate formation of the DNA replication initiation complex once per cell cycle. Binds the DnaA box (a 9 base pair repeat at the origin) and separates the double-stranded (ds)DNA. Forms a right-handed helical filament on oriC DNA; dsDNA binds to the exterior of the filament while single-stranded (ss)DNA is stabiized in the filament's interior. The ATP-DnaA-oriC complex binds and stabilizes one strand of the AT-rich DNA unwinding element (DUE), permitting loading of DNA polymerase. After initiation quickly degrades to an ADP-DnaA complex that is not apt for DNA replication. Binds acidic phospholipids. The chain is Chromosomal replication initiator protein DnaA from Pectobacterium carotovorum subsp. carotovorum (strain PC1).